We begin with the raw amino-acid sequence, 1157 residues long: Peroxisomal ATPase PEX1 (1157 aa).

Disordered regions lie at residues 187–221 (SISS…NNGE) and 1135–1157 (SGRD…STLM). Residues 205 to 217 (SSTSTATGRRSVT) show a composition bias toward low complexity.

The protein belongs to the AAA ATPase family. In terms of assembly, interacts with PEX6; forming the PEX1-PEX6 AAA ATPase complex, which is composed of a heterohexamer formed by a trimer of PEX1-PEX6 dimers.

The protein localises to the membrane. The catalysed reaction is ATP + H2O = ADP + phosphate + H(+). Its function is as follows. Component of the PEX1-PEX6 AAA ATPase complex involved in peroxisome biosynthesis. The complex acts as a protein dislocase complex that mediates the ATP-dependent extraction of the PEX5 receptor from peroxisomal membranes, an essential step for PEX5 recycling. Specifically recognizes PEX5 monoubiquitinated at 'Cys-6', and pulls it out of the peroxisome lumen through the PEX2-PEX10-PEX12 retrotranslocation channel. Extraction by the PEX1-PEX6 AAA ATPase complex is accompanied by unfolding of the TPR repeats and release of bound cargo from PEX5. In Komagataella pastoris (Yeast), this protein is Peroxisomal ATPase PEX1.